Reading from the N-terminus, the 128-residue chain is Kinase-associated lipoprotein B (128 aa).

The signal sequence occupies residues 1–25 (MSTFETGSIVKGFYKTGVYIGEITA). Residue Cys-26 is the site of N-palmitoyl cysteine attachment. Cys-26 is lipidated: S-diacylglycerol cysteine.

It localises to the cell membrane. Its function is as follows. May play a role in the activation or the expression of KinB. This chain is Kinase-associated lipoprotein B (kapB), found in Bacillus subtilis (strain 168).